A 541-amino-acid polypeptide reads, in one-letter code: MADEDGEGIHPSAPHRNGGGGGGGGSGLHCAGNGGGGGGGPRVVRIVKSESGYGFNVRGQVSEGGQLRSINGELYAPLQHVSAVLPGGAADRAGVRKGDRILEVNHVNVEGATHKQVVDLIRAGEKELILTVLSVPPHEADNLDPSDDSLGQSFYDYTEKQAVPISVPRYKHVEQNGEKFVVYNVYMAGRQLCSKRYREFAILHQNLKREFANFTFPRLPGKWPFSLSEQQLDARRRGLEEYLEKVCSIRVIGESDIMQEFLSESDENYNGVSDVELRVALPDGTTVTVRVKKNSTTDQVYQAIAAKVGMDSTTVNYFALFEVISHSFVRKLAPNEFPHKLYIQNYTSAVPGTCLTIRKWLFTTEEEILLNDNDLAVTYFFHQAVDDVKKGYIKAEEKSYQLQKLYEQRKMVMYLNMLRTCEGYNEIIFPHCACDSRRKGHVITAISITHFKLHACTEEGQLENQVIAFEWDEMQRWDTDEEGMAFCFEYARGEKKPRWVKIFTPYFNYMHECFERVFCELKWRKENIFQMARSQQRDVAT.

Residues 1-42 (MADEDGEGIHPSAPHRNGGGGGGGGSGLHCAGNGGGGGGGPR) are disordered. Gly residues predominate over residues 17-41 (NGGGGGGGGSGLHCAGNGGGGGGGP). The PDZ domain maps to 43-136 (VVRIVKSESG…ELILTVLSVP (94 aa)). Residues Ser51 and Ser62 each carry the phosphoserine modification. A PX domain is found at 161–269 (QAVPISVPRY…EFLSESDENY (109 aa)). Residues 273 to 362 (SDVELRVALP…TCLTIRKWLF (90 aa)) form the Ras-associating domain. The segment at 273-362 (SDVELRVALP…TCLTIRKWLF (90 aa)) is FERM-like region F1. Positions 373–421 (NDLAVTYFFHQAVDDVKKGYIKAEEKSYQLQKLYEQRKMVMYLNMLRTC) are FERM-like region F2. The segment at 425 to 525 (NEIIFPHCAC…RVFCELKWRK (101 aa)) is FERM-like region F3.

It belongs to the sorting nexin family. As to quaternary structure, core component of the SNX27-retromer, a multiprotein complex composed of SNX27, the WASH complex and the retromer complex. Interacts (via PDZ domain) with a number of target transmembrane proteins (via PDZ-binding motif): ABCC4, ADRB2, ARHGEF7, GRIA1, GRIA2, GRIN1, GRIN2A GRIN2C, KCNJ6, KCNJ9 and SLC2A1/GLUT1. Interacts (via the FERM-like regions) with the WASH complex. Interacts with SNX1. Interacts with CYTIP. Isoform 1 and isoform 2 directly interact with DGKZ. Isoform 1 and isoform 2 interact with HT4R isoform 5-HTA(A). Interacts with MCC. Interacts (via PDZ domains) with SLC9A3; directs SLC9A3 membrane insertion from early endosomes to the plasma membrane. As to expression, widely expressed. Expressed in cells of hematopoietic origin (at protein level).

Its subcellular location is the early endosome membrane. It localises to the cytoplasm. It is found in the cytosol. Functionally, involved in the retrograde transport from endosome to plasma membrane, a trafficking pathway that promotes the recycling of internalized transmembrane proteins. Following internalization, endocytosed transmembrane proteins are delivered to early endosomes and recycled to the plasma membrane instead of being degraded in lysosomes. SNX27 specifically binds and directs sorting of a subset of transmembrane proteins containing a PDZ-binding motif at the C-terminus: following interaction with target transmembrane proteins, associates with the retromer complex, preventing entry into the lysosomal pathway, and promotes retromer-tubule based plasma membrane recycling. SNX27 also binds with the WASH complex. Interacts with membranes containing phosphatidylinositol-3-phosphate (PtdIns(3P)). May participate in establishment of natural killer cell polarity. Recruits CYTIP to early endosomes. This Homo sapiens (Human) protein is Sorting nexin-27 (SNX27).